A 298-amino-acid chain; its full sequence is METEISGMDNPAMTLDEVSMERNKSFVKALQELKNLRPQLYSAADYCEKSYLHSEQKQMVLDNLKDYTVKALVNAVDHLGTVASKLTDLFDHQNSDISTMEMRASCVSQQLLTCRTYIDKEGLRQQQLLAVIPLHHKHYILPNSVNKRVHFSPLRRTDTRQNHYQAISRLQPSDAPASKSLSWHLGSETKSTLKGTSTVAPSSKDSKAFSKTSGVFHLLGDDENIANKKPLAGSQVSGVPAASTAHKDLEVPKLLTAHRSLDNNPRREIIQAPVRTKSVLSAFFVKQKTPKLKAGYVS.

The protein belongs to the ABI family. In terms of assembly, binds SCAR2. As to expression, expressed in seedlings, roots, hypocotyls, cotyledons, leaves, stems, and flowers.

The protein resides in the cytoplasm. The protein localises to the cytoskeleton. In terms of biological role, involved in regulation of actin and microtubule organization. Part of a WAVE complex that activates the Arp2/3 complex. The protein is Protein ABIL1 (ABIL1) of Arabidopsis thaliana (Mouse-ear cress).